The primary structure comprises 64 residues: uncharacterized protein (64 aa).

2 consecutive transmembrane segments (helical) span residues Ile4–Tyr24 and Met35–Met55.

The protein resides in the cell membrane. This is an uncharacterized protein from Bacillus subtilis (strain 168).